Reading from the N-terminus, the 332-residue chain is 2,3-diketo-L-gulonate reductase (332 aa).

H44 functions as the Proton donor in the catalytic mechanism. NAD(+) contacts are provided by residues 168 to 174, 224 to 225, and 304 to 306; these read ITMVDMS, WK, and GHE.

Belongs to the LDH2/MDH2 oxidoreductase family. DlgD subfamily. As to quaternary structure, homodimer.

It localises to the cytoplasm. The catalysed reaction is 3-dehydro-L-gulonate + NAD(+) = 2,3-dioxo-L-gulonate + NADH + H(+). It carries out the reaction 3-dehydro-L-gulonate + NADP(+) = 2,3-dioxo-L-gulonate + NADPH + H(+). In terms of biological role, catalyzes the reduction of 2,3-diketo-L-gulonate in the presence of NADH, to form 3-keto-L-gulonate. This is 2,3-diketo-L-gulonate reductase from Salmonella heidelberg (strain SL476).